The chain runs to 544 residues: Probable protein kinase UbiB (544 aa).

The region spanning 123–501 is the Protein kinase domain; that stretch reads DFDIKPLASA…KRQQGTGKFL (379 aa). ATP contacts are provided by residues 129 to 137 and K152; that span reads LASASIAQV. The active-site Proton acceptor is D287. The next 2 helical transmembrane spans lie at 496-516 and 519-539; these read GTGKFLFGVGATLVVCSAIWI and QLEPLAIGSATIGVLCWLLSW.

The protein belongs to the ABC1 family. UbiB subfamily.

It localises to the cell inner membrane. The protein operates within cofactor biosynthesis; ubiquinone biosynthesis [regulation]. In terms of biological role, is probably a protein kinase regulator of UbiI activity which is involved in aerobic coenzyme Q (ubiquinone) biosynthesis. The sequence is that of Probable protein kinase UbiB from Vibrio cholerae serotype O1 (strain ATCC 39315 / El Tor Inaba N16961).